The primary structure comprises 437 residues: Branched-chain amino acid transport system 3 carrier protein (437 aa).

12 consecutive transmembrane segments (helical) span residues isoleucine 9–proline 29, valine 40–isoleucine 60, tyrosine 79–proline 99, alanine 120–glycine 140, isoleucine 155–threonine 175, phenylalanine 189–valine 209, tyrosine 226–phenylalanine 246, leucine 277–leucine 297, leucine 316–isoleucine 336, valine 342–leucine 362, isoleucine 369–alanine 389, and leucine 399–leucine 419.

It belongs to the branched chain amino acid transporter family.

It localises to the cell inner membrane. Functionally, component of the LIV-III transport system for branched-chain amino acids. BraZ is specific for isoleucine and valine. The LIV-III transport system may be H(+)-coupled. The chain is Branched-chain amino acid transport system 3 carrier protein (braZ) from Pseudomonas aeruginosa (strain ATCC 15692 / DSM 22644 / CIP 104116 / JCM 14847 / LMG 12228 / 1C / PRS 101 / PAO1).